A 127-amino-acid polypeptide reads, in one-letter code: Protein pkiA (127 aa).

Residues 16-127 enclose the HIT domain; that stretch reads IFAKIISGAI…GGRQMNWPPG (112 aa).

In Dictyostelium discoideum (Social amoeba), this protein is Protein pkiA (pkiA).